The following is a 720-amino-acid chain: Polyribonucleotide nucleotidyltransferase (720 aa).

Mg(2+) is bound by residues aspartate 487 and aspartate 493. In terms of domain architecture, KH spans 554 to 613 (PRITTISIPKEKIREVIGTGGKVIREICEQTGAKIDIDDDGTIKVASVDADAAQRAIDWI). Residues 623 to 691 (GVIYNGKVVK…DRGKVKLSMK (69 aa)) enclose the S1 motif domain. Positions 695 to 720 (QTTGEDISAQLEAERAASKRERHHED) are disordered. Residues 706 to 720 (EAERAASKRERHHED) are compositionally biased toward basic and acidic residues.

Belongs to the polyribonucleotide nucleotidyltransferase family. Mg(2+) is required as a cofactor.

It is found in the cytoplasm. The catalysed reaction is RNA(n+1) + phosphate = RNA(n) + a ribonucleoside 5'-diphosphate. Involved in mRNA degradation. Catalyzes the phosphorolysis of single-stranded polyribonucleotides processively in the 3'- to 5'-direction. The chain is Polyribonucleotide nucleotidyltransferase from Paramagnetospirillum magneticum (strain ATCC 700264 / AMB-1) (Magnetospirillum magneticum).